Reading from the N-terminus, the 164-residue chain is Proline-rich protein 2 (164 aa).

The first 21 residues, 1–21, serve as a signal peptide directing secretion; the sequence is MNLKVGIAVLIIALIVPSAQP.

In terms of tissue distribution, component of the acid-soluble organic matrix of calcified layers of the shell (at protein level).

It is found in the secreted. This Lottia gigantea (Giant owl limpet) protein is Proline-rich protein 2.